A 213-amino-acid chain; its full sequence is Orotate phosphoribosyltransferase (213 aa).

Lys26 is a 5-phospho-alpha-D-ribose 1-diphosphate binding site. An orotate-binding site is contributed by 34–35 (FF). Residues 72 to 73 (YK), Arg99, Lys100, Lys103, His105, and 124 to 132 (DDVITAGTA) contribute to the 5-phospho-alpha-D-ribose 1-diphosphate site. Thr128 and Arg156 together coordinate orotate.

Belongs to the purine/pyrimidine phosphoribosyltransferase family. PyrE subfamily. In terms of assembly, homodimer. Mg(2+) is required as a cofactor.

The catalysed reaction is orotidine 5'-phosphate + diphosphate = orotate + 5-phospho-alpha-D-ribose 1-diphosphate. Its pathway is pyrimidine metabolism; UMP biosynthesis via de novo pathway; UMP from orotate: step 1/2. Functionally, catalyzes the transfer of a ribosyl phosphate group from 5-phosphoribose 1-diphosphate to orotate, leading to the formation of orotidine monophosphate (OMP). In Enterobacter sp. (strain 638), this protein is Orotate phosphoribosyltransferase.